The chain runs to 55 residues: Photosystem II reaction center X protein (55 aa).

The helical transmembrane segment at 24 to 44 threads the bilayer; it reads IGSFLAAAALIVVPAASFLLW.

It belongs to the PsbX family. Type 2 subfamily. As to quaternary structure, PSII consists of a core antenna complex that captures photons, and an electron transfer chain that converts photonic excitation into a charge separation. PSII forms dimeric complexes.

It is found in the cellular thylakoid membrane. Its function is as follows. Involved in the binding and/or turnover of quinones at the Q(B) site of Photosystem II. This is Photosystem II reaction center X protein from Prochlorococcus marinus (strain SARG / CCMP1375 / SS120).